The chain runs to 311 residues: tRNA (cytosine(49)-C(5))-methyltransferase (311 aa).

S-adenosyl-L-methionine-binding positions include 118-124, aspartate 142, aspartate 169, and aspartate 186; that span reads AAAPGSK. Cysteine 239 functions as the Nucleophile in the catalytic mechanism.

Belongs to the class I-like SAM-binding methyltransferase superfamily. RsmB/NOP family. In terms of assembly, forms a tripartite complex with archease and tRNA. Binds only the oligomeric forms of the archease.

The protein localises to the cytoplasm. The enzyme catalyses cytidine(49) in tRNA precursor + S-adenosyl-L-methionine = 5-methylcytidine(49) in tRNA precursor + S-adenosyl-L-homocysteine + H(+). With respect to regulation, substrate specificity and tendency to aggregate are influenced by archease. Its function is as follows. Catalyzes AdoMet-dependent formation of m5C in tRNA. In the presence of protein archease, specifically methylates the cytosine at position 49 (m5C49) of tRNA. In the absence of archease, catalyzes the formation of m5C at many locations in tRNAs or rRNAs. In Pyrococcus abyssi (strain GE5 / Orsay), this protein is tRNA (cytosine(49)-C(5))-methyltransferase.